We begin with the raw amino-acid sequence, 333 residues long: Olfactory receptor 1078 (333 aa).

The Extracellular segment spans residues 1–25; sequence MDSSNRTRVSEFLLLGFVENKDLQP. An N-linked (GlcNAc...) asparagine glycan is attached at N5. A helical membrane pass occupies residues 26-50; the sequence is LIYGLFLSMYLVTVIGNISIIVAII. Over 51–57 the chain is Cytoplasmic; it reads SDPCLHT. The chain crosses the membrane as a helical span at residues 58–79; the sequence is PMYFFLSNLSFVDICFISTTVP. Over 80–100 the chain is Extracellular; that stretch reads KMLVNIQTQNNVITYAGCITQ. C97 and C189 are disulfide-bonded. A helical membrane pass occupies residues 101–120; that stretch reads IYFFLLFVELDNFLLTIMAY. Topologically, residues 121–139 are cytoplasmic; sequence DRYVAICHPMHYTVIMNYK. Residues 140-158 traverse the membrane as a helical segment; sequence LCGFLVLVSWIVSVLHALF. Topologically, residues 159–196 are extracellular; the sequence is QSLMMLALPFCTHLEIPHYFCEPNQVIQLTCSDAFLND. Residues 197–219 traverse the membrane as a helical segment; it reads LVIYFTLVLLATVPLAGIFYSYF. Over 220–236 the chain is Cytoplasmic; the sequence is KIVSSICAISSVHGKYK. Residues 237–260 traverse the membrane as a helical segment; that stretch reads AFSTCASHLSVVSLFYCTGLGVYL. Topologically, residues 261–272 are extracellular; that stretch reads SSAANNSSQASA. Residues 273–292 form a helical membrane-spanning segment; that stretch reads TASVMYTVVTPMVNPFIYSL. Residues 293–333 lie on the Cytoplasmic side of the membrane; it reads RNKDVKSVLKKTLCEEVIRSPPSLLHFFLVLCHLPCFIFCY.

The protein belongs to the G-protein coupled receptor 1 family. As to expression, olfactory epithelium.

It is found in the cell membrane. Its function is as follows. Odorant receptor. This is Olfactory receptor 1078 (Olr1078) from Rattus norvegicus (Rat).